The chain runs to 968 residues: Hexon protein (968 aa).

The residue at position 2 (Ala2) is an N-acetylalanine; by host. The interval 125 to 188 (APKGAPNSCE…APLSGETITK (64 aa)) is disordered. Over residues 147–162 (EDEEEEDEDEEEEEEE) the composition is skewed to acidic residues. Ser182 and Ser283 each carry phosphoserine; by host. Residue Tyr956 is modified to Phosphotyrosine; by host.

Belongs to the adenoviridae hexon protein family. In terms of assembly, homotrimer. Interacts with the capsid vertex protein; this interaction binds the peripentonal hexons to the neighboring penton base. Interacts with the hexon-linking protein; this interaction tethers the hexons surrounding the penton to those situated in the central plate of the facet. Interacts with the hexon-interlacing protein; this interaction lashes the hexons together. Interacts with pre-protein VI; this interaction probably allows nuclear import of hexon trimers and possibly pre-capsid assembly. Interacts with host dyneins DYNC1LI1 and DYNC1I2; this interaction might be involved in intracellular microtubule-dependent transport of incoming viral capsid. Interacts with the shutoff protein; this interaction allows folding and formation of hexons trimers. Interacts with host NUP214 (via N-terminus); this interaction might be essential for the release of the virus genome to the nucleus.

It is found in the virion. The protein resides in the host nucleus. Major capsid protein that self-associates to form 240 hexon trimers, each in the shape of a hexagon, building most of the pseudo T=25 capsid. Assembled into trimeric units with the help of the chaperone shutoff protein. Transported by pre-protein VI to the nucleus where it associates with other structural proteins to form an empty capsid. Might be involved, through its interaction with host dyneins, in the intracellular microtubule-dependent transport of incoming viral capsid to the nucleus. This chain is Hexon protein, found in Homo sapiens (Human).